The sequence spans 133 residues: uncharacterized protein (133 aa).

2 helical membrane passes run 13–33 (FLLS…LFLS) and 73–93 (FGNP…LLLL).

The protein resides in the membrane. This is an uncharacterized protein from Saccharomyces cerevisiae (strain ATCC 204508 / S288c) (Baker's yeast).